The sequence spans 292 residues: RNA-binding P34 protein (292 aa).

The chain crosses the membrane as a helical span at residues Cys29 to Met46. Residues Glu219–Glu292 form an RNA-binding region.

Its subcellular location is the host endoplasmic reticulum membrane. Its function is as follows. Acts as a ssRNA-binding protein that may be involved in targeting RNA2 to replication sites or facilitating RNA2 replication. The chain is RNA-binding P34 protein from Lettuce infectious yellows virus (isolate United States/92) (LIYV).